A 211-amino-acid polypeptide reads, in one-letter code: Claudin-7 (211 aa).

Residues 1 to 7 (MANSGLQ) are Cytoplasmic-facing. Residues 8–28 (LLGFSMALLGWVGLVACTAIP) form a helical membrane-spanning segment. Topologically, residues 29-81 (QWQMSSYAGDNIITAQAMYKGLWMDCVTQSTGMMSCKMYDSVLALSAALQATR) are extracellular. Residues 82-102 (ALMVVSLVLGFLAMFVATMGM) form a helical membrane-spanning segment. The Cytoplasmic segment spans residues 103-117 (KCTRCGGDDKVKKAR). A helical membrane pass occupies residues 118-138 (IAMGGGIIFIVAGLAALVACS). Over 139-160 (WYGHQIVTDFYNPLIPTNIKYE) the chain is Extracellular. The helical transmembrane segment at 161–181 (FGPAIFIGWAGSALVILGGAL) threads the bilayer. At 182–211 (LSCSCPGNESKAGYRVPRSYPKSNSSKEYV) the chain is on the cytoplasmic side. The interval 210 to 211 (YV) is interactions with TJP1, TJP2 and TJP3.

Belongs to the claudin family. Directly interacts with TJP1/ZO-1, TJP2/ZO-2 and TJP3/ZO-3. The phosphorylated form interacts with EPCAM. Does not interact with CD81. Phosphorylated. As to expression, expressed in kidney, lung and prostate. Isoform 1 seems to be predominant, except in some normal prostate samples, where isoform 2 is the major form. Down-regulated in breast cancers, including ductal carcinoma in situ (DCIS), lobular carcinoma in situ (LCIS) and invasive ductal carcinoma (IDC) (at protein level), as well as in several cancer cell lines. Loss of expression correlates with histological grade, occurring predominantly in high-grade lesions.

It is found in the cell membrane. The protein localises to the basolateral cell membrane. Its subcellular location is the cell junction. It localises to the tight junction. Plays a major role in tight junction-specific obliteration of the intercellular space. The protein is Claudin-7 (CLDN7) of Homo sapiens (Human).